An 86-amino-acid chain; its full sequence is U2-sicaritoxin-Li1b (86 aa).

Residues 1–20 (MKIELFLVVIFALAIHMATA) form the signal peptide. Positions 21–33 (EEVIESDIEPAER) are excised as a propeptide. 4 cysteine pairs are disulfide-bonded: cysteine 35–cysteine 53, cysteine 42–cysteine 62, cysteine 52–cysteine 71, and cysteine 64–cysteine 69. Position 85 is a lysine amide (lysine 85).

The protein belongs to the neurotoxin 39 family. As to expression, expressed by the venom gland.

Its subcellular location is the secreted. Toxin active against S.frugiperda larvae. May act on sodium channels (Nav). This Loxosceles intermedia (Brown spider) protein is U2-sicaritoxin-Li1b.